A 449-amino-acid chain; its full sequence is Phosphoglucosamine mutase (449 aa).

S100 serves as the catalytic Phosphoserine intermediate. Positions 100, 241, 243, and 245 each coordinate Mg(2+). S100 is modified (phosphoserine).

This sequence belongs to the phosphohexose mutase family. Mg(2+) is required as a cofactor. Activated by phosphorylation.

The enzyme catalyses alpha-D-glucosamine 1-phosphate = D-glucosamine 6-phosphate. Catalyzes the conversion of glucosamine-6-phosphate to glucosamine-1-phosphate. This chain is Phosphoglucosamine mutase, found in Clostridium botulinum (strain Langeland / NCTC 10281 / Type F).